The following is a 373-amino-acid chain: 3 beta-hydroxysteroid dehydrogenase/Delta 5--&gt;4-isomerase type 1 (373 aa).

Residues 10-15 (GAGGFL), Tyr-155, and Lys-159 contribute to the NADP(+) site. Lys-159 acts as the Proton donor in catalysis. The helical transmembrane segment at 288–308 (LSLMYWIGFLLEIVSFLLRPI) threads the bilayer.

This sequence belongs to the 3-beta-HSD family. In terms of tissue distribution, placenta and skin. Predominantly expressed in mammary gland tissue.

Its subcellular location is the endoplasmic reticulum membrane. It localises to the mitochondrion membrane. The enzyme catalyses a 3beta-hydroxy-Delta(5)-steroid + NAD(+) = a 3-oxo-Delta(5)-steroid + NADH + H(+). It catalyses the reaction pregnenolone + NAD(+) = pregn-5-ene-3,20-dione + NADH + H(+). The catalysed reaction is 3beta-hydroxyandrost-5-en-17-one + NAD(+) = androst-5-ene-3,17-dione + NADH + H(+). It carries out the reaction androst-5-en-3beta,17beta-diol + NAD(+) = 17beta-hydroxy-androst-5-en-3-one + NADH + H(+). The enzyme catalyses a 3beta-hydroxysteroid + NADP(+) = a 3-oxosteroid + NADPH + H(+). It catalyses the reaction 5alpha-androstane-3beta,17beta-diol + NADP(+) = 17beta-hydroxy-5alpha-androstan-3-one + NADPH + H(+). The catalysed reaction is 3beta-hydroxy-5alpha-androstan-17-one + NADP(+) = 5alpha-androstan-3,17-dione + NADPH + H(+). It carries out the reaction a 3-oxo-Delta(5)-steroid = a 3-oxo-Delta(4)-steroid. The enzyme catalyses pregn-5-ene-3,20-dione = progesterone. It catalyses the reaction androst-5-ene-3,17-dione = androst-4-ene-3,17-dione. The catalysed reaction is 17beta-hydroxy-androst-5-en-3-one = testosterone. It carries out the reaction 5alpha-androstane-3beta,17beta-diol + NAD(+) = 17beta-hydroxy-5alpha-androstan-3-one + NADH + H(+). The protein operates within steroid hormone biosynthesis. It participates in steroid metabolism. Functionally, a bifunctional enzyme responsible for the oxidation and isomerization of 3beta-hydroxy-Delta(5)-steroid precursors to 3-oxo-Delta(4)-steroids, an essential step in steroid hormone biosynthesis. Specifically catalyzes the conversion of pregnenolone to progesterone, 17alpha-hydroxypregnenolone to 17alpha-hydroxyprogesterone, dehydroepiandrosterone (DHEA) to 4-androstenedione, and androstenediol to testosterone. Additionally, catalyzes the interconversion between 3beta-hydroxy and 3-oxo-5alpha-androstane steroids controlling the bioavalability of the active forms. Specifically converts dihydrotestosterone to its inactive form 5alpha-androstanediol, that does not bind androgen receptor/AR. Also converts androstanedione, a precursor of testosterone and estrone, to epiandrosterone. Expected to use NAD(+) as preferred electron donor for the 3beta-hydroxy-steroid dehydrogenase activity and NADPH for the 3-ketosteroid reductase activity. The chain is 3 beta-hydroxysteroid dehydrogenase/Delta 5--&gt;4-isomerase type 1 from Homo sapiens (Human).